The primary structure comprises 317 residues: Toluene-4-sulfonate monooxygenase system reductase subunit TsaB1 (317 aa).

Positions 2–108 constitute an FAD-binding FR-type domain; the sequence is SADVPVTVAA…RATCSEMAPE (107 aa). Position 110–220 (110–220) interacts with NAD(+); it reads RRVLLLAGGI…PGSVRMERFK (111 aa). The 2Fe-2S ferredoxin-type domain occupies 230-317; sequence QPFELVLQRA…CGGGRLVLDI (88 aa). [2Fe-2S] cluster is bound by residues C266, C271, C274, and C304.

In terms of assembly, monomer. Part of the p-toluenesulfonate methyl-monooxygenase complex TsaBM, comprising the reductase TsaB and the oxygenase TsaM. Requires FMN as cofactor.

Iron-sulfur flavoprotein carrying electrons from NADH to the oxygenase TsaM. Involved in the toluene-4-sulfonate degradation pathway. In Comamonas testosteroni (Pseudomonas testosteroni), this protein is Toluene-4-sulfonate monooxygenase system reductase subunit TsaB1 (tsaB1).